A 342-amino-acid polypeptide reads, in one-letter code: MRVISRARSACTWTSCTSLSPCSTSCPPSPAAPTLLRRRSLPQQRRRPSSSPNRRVRGVTTSPCPTRSLVYKRRVGAPQRLCAETVATMQAQEANALLLSRMEALEWFKKFTVWLRVYAIFIFQLAFSFGLGSVFWLGFPQNRNFCVENYSFFLTVLVPIVCMFITYTLGNEHPSNATVLFIYLLANSLTAAIFQMCSESRVLVGSYVMTLALFISFTGLAFLGGRDRRRWKCISCVYVVMLLSFLTLALLSDADWLQKIVVTLCAFSISFFLGILAYDSLMVIFFCPPNQCIRHAVCLYLDSMAIFLTLLLMLSGPRWISLSDGAPLDNGTLTAASTTGKS.

Residues 21-64 (PCSTSCPPSPAAPTLLRRRSLPQQRRRPSSSPNRRVRGVTTSPC) form a disordered region. Residues 36–48 (LRRRSLPQQRRRP) are compositionally biased toward basic residues. The helical transmembrane segment at 119-139 (AIFIFQLAFSFGLGSVFWLGF) threads the bilayer. A glycan (N-linked (GlcNAc...) asparagine; by host) is linked at Asn149. A helical transmembrane segment spans residues 150–170 (YSFFLTVLVPIVCMFITYTLG). An N-linked (GlcNAc...) asparagine; by host glycan is attached at Asn176. The next 5 helical transmembrane spans lie at 177 to 197 (ATVL…FQMC), 202 to 222 (VLVG…GLAF), 231 to 251 (WKCI…LALL), 266 to 286 (AFSI…VIFF), and 296 to 316 (AVCL…MLSG). Asn330 carries N-linked (GlcNAc...) asparagine; by host glycosylation.

It belongs to the cytomegalovirus US12 family.

It is found in the membrane. This is Transmembrane protein HWLF3 (US20) from Homo sapiens (Human).